Here is a 315-residue protein sequence, read N- to C-terminus: MPNLKSIRDRIQSVKNTKKITEAMRLVAAARVRRAQEQVIATRPFADRLAQVLYGLQTRLRFEDVDLPLLKKREVKSVGLLVISGDRGLCGGYNTNVIRRAENRAKELKAEGLDYTFVIVGRKAEQYFRRREQPIDASYTGLEQIPTADEANKIADELLSLFLSEKVDRIELVYTRFVSLVSSRPVIQTLLPLDTQGLEAADDEIFRLTTRGGQFQVERQTVTSQARPLPRDMIFEQDPVQILDSLLPLYLSNQLLRALQESAASELAARMTAMSNASENAGELIKSLSLSYNKARQAAITQELLEVVGGAEALT.

This sequence belongs to the ATPase gamma chain family. F-type ATPases have 2 components, CF(1) - the catalytic core - and CF(0) - the membrane proton channel. CF(1) has five subunits: alpha(3), beta(3), gamma(1), delta(1), epsilon(1). CF(0) has three main subunits: a, b and c.

Its subcellular location is the cellular thylakoid membrane. Functionally, produces ATP from ADP in the presence of a proton gradient across the membrane. The gamma chain is believed to be important in regulating ATPase activity and the flow of protons through the CF(0) complex. This chain is ATP synthase gamma chain, found in Nostoc sp. (strain PCC 7120 / SAG 25.82 / UTEX 2576).